The chain runs to 96 residues: UPF0235 protein PC1_3453 (96 aa).

This sequence belongs to the UPF0235 family.

The chain is UPF0235 protein PC1_3453 from Pectobacterium carotovorum subsp. carotovorum (strain PC1).